A 186-amino-acid chain; its full sequence is Agglutinin isolectin 3 (186 aa).

Position 1 is a pyrrolidone carboxylic acid (Gln1). Chitin-binding type-1 domains lie at 1 to 42 (QRCG…ACWT), 43 to 85 (SKRC…PCRA), 86 to 128 (DIKC…ACST), and 129 to 171 (DKPC…GCDG). Cystine bridges form between Cys3-Cys18, Cys12-Cys24, Cys17-Cys31, Cys35-Cys40, Cys46-Cys61, Cys55-Cys67, Cys60-Cys74, Cys78-Cys83, Cys89-Cys104, Cys98-Cys110, Cys103-Cys117, Cys121-Cys126, Cys132-Cys147, Cys141-Cys153, Cys146-Cys160, and Cys164-Cys169. Substrate is bound at residue 10–12 (MEC). 62–73 (SQYGHCGFGAEY) contributes to the substrate binding site. 114–115 (SE) provides a ligand contact to substrate. A propeptide spanning residues 172 to 186 (VFAEAIATNSTLLAE) is cleaved from the precursor. Asn180 carries N-linked (GlcNAc...) asparagine glycosylation.

In terms of assembly, homodimer, u-shaped.

Its function is as follows. N-acetyl-D-glucosamine / N-acetyl-D-neuraminic acid binding lectin. The polypeptide is Agglutinin isolectin 3 (Triticum aestivum (Wheat)).